A 126-amino-acid chain; its full sequence is Small ribosomal subunit protein uS13 (126 aa).

The tract at residues 94-126 is disordered; it reads RNLPVHGQRTHTNARTRKGPRRAIAGKKKAGKK.

Belongs to the universal ribosomal protein uS13 family. In terms of assembly, part of the 30S ribosomal subunit. Forms a loose heterodimer with protein S19. Forms two bridges to the 50S subunit in the 70S ribosome.

Located at the top of the head of the 30S subunit, it contacts several helices of the 16S rRNA. In the 70S ribosome it contacts the 23S rRNA (bridge B1a) and protein L5 of the 50S subunit (bridge B1b), connecting the 2 subunits; these bridges are implicated in subunit movement. Contacts the tRNAs in the A and P-sites. The sequence is that of Small ribosomal subunit protein uS13 from Parafrankia sp. (strain EAN1pec).